We begin with the raw amino-acid sequence, 828 residues long: Periplasmic nitrate reductase (828 aa).

The segment at residues 1 to 31 (MKLSRRGFMKANAVAAAAAAAGLSVPGVARA) is a signal peptide (tat-type signal). The 4Fe-4S Mo/W bis-MGD-type domain occupies 39 to 95 (IKWDKAPCRFCGTGCGVLVGTQQGRVVACQGDPDAPVNRGLNCIKGYFLPKIMYGED). Residues Cys46, Cys49, Cys53, and Cys81 each coordinate [4Fe-4S] cluster. Residues Lys83, Gln150, Asn175, Cys179, 212–219 (WGANMAEM), 243–247 (STYQH), 262–264 (QSD), Met372, Gln376, Asn482, 508–509 (SD), Lys531, Asp558, and 718–727 (TGRVLEHWHT) each bind Mo-bis(molybdopterin guanine dinucleotide). Substrate is bound at residue Phe794. Mo-bis(molybdopterin guanine dinucleotide) is bound by residues Asn802 and Lys819.

It belongs to the prokaryotic molybdopterin-containing oxidoreductase family. NasA/NapA/NarB subfamily. As to quaternary structure, component of the periplasmic nitrate reductase NapAB complex composed of NapA and NapB. [4Fe-4S] cluster serves as cofactor. The cofactor is Mo-bis(molybdopterin guanine dinucleotide). In terms of processing, predicted to be exported by the Tat system. The position of the signal peptide cleavage has not been experimentally proven.

It is found in the periplasm. The catalysed reaction is 2 Fe(II)-[cytochrome] + nitrate + 2 H(+) = 2 Fe(III)-[cytochrome] + nitrite + H2O. Its function is as follows. Catalytic subunit of the periplasmic nitrate reductase complex NapAB. Receives electrons from NapB and catalyzes the reduction of nitrate to nitrite. The chain is Periplasmic nitrate reductase from Shigella dysenteriae serotype 1 (strain Sd197).